The sequence spans 695 residues: Potassium voltage-gated channel subfamily KQT member 4 (695 aa).

The segment at 1–21 (MAEAPPRRLGLGPPPGDAPRA) is disordered. At 1–96 (MAEAPPRRLG…VYNVLERPRG (96 aa)) the chain is on the cytoplasmic side. Arg-93 contacts a 1,2-diacyl-sn-glycero-3-phospho-(1D-myo-inositol-4,5-bisphosphate). The helical transmembrane segment at 97–118 (WAFVYHVFIFLLVFSCLVLSVL) threads the bilayer. Over 119 to 129 (STIQEHQELAN) the chain is Extracellular. A helical membrane pass occupies residues 130 to 152 (ECLLILEFVMIVVFGLEYIVRVW). Over 153–168 (SAGCCCRYRGWQGRFR) the chain is Cytoplasmic. The chain crosses the membrane as a helical span at residues 169–191 (FARKPFCVIDFIVFVASVAVIAA). Lys-172 provides a ligand contact to a 1,2-diacyl-sn-glycero-3-phospho-(1D-myo-inositol-4,5-bisphosphate). Residues 192 to 202 (GTQGNIFATSA) lie on the Extracellular side of the membrane. Residues 203 to 223 (LRSMRFLQILRMVRMDRRGGT) traverse the membrane as a helical; Voltage-sensor segment. Positions 219, 220, 225, and 235 each coordinate a 1,2-diacyl-sn-glycero-3-phospho-(1D-myo-inositol-4,5-bisphosphate). The Cytoplasmic portion of the chain corresponds to 224–235 (WKLLGSVVYAHS). A helical transmembrane segment spans residues 236 to 258 (KELITAWYIGFLVLIFASFLVYL). At 259–270 (AEKDANSDFSSY) the chain is on the extracellular side. The pore-forming intramembrane region spans 271–292 (ADSLWWGTITLTTIGYGDKTPH). Position 293 (Thr-293) is a topological domain, extracellular. Residues 294 to 322 (WLGRVLAAGFALLGISFFALPAGILGSGF) traverse the membrane as a helical segment. Topologically, residues 323-695 (ALKVQEQHRQ…ISRSVSTNMD (373 aa)) are cytoplasmic. A 1,2-diacyl-sn-glycero-3-phospho-(1D-myo-inositol-4,5-bisphosphate) is bound by residues His-330 and Lys-333. The tract at residues 342–351 (AANLIQAAWR) is interaction with CALM. 2 disordered regions span residues 400 to 480 (RRAP…TKVQ) and 496 to 515 (RLKPRTSAEDAPSEEVAEEK). Composition is skewed to polar residues over residues 443-452 (GSSQRRTGPS) and 463-480 (TSPSSEQVGEATSPTKVQ). Positions 535 to 549 (RSIRILKFLVAKRKF) are interaction with CALM. The tract at residues 546–650 (KRKFKETLRP…SRCLRSGTSA (105 aa)) is C-terminal assembly domain (tetramerization). Positions 587–606 (VGRGPGDRKAREKGDKGPSD) are disordered. Residues 591–605 (PGDRKAREKGDKGPS) show a composition bias toward basic and acidic residues. Positions 615 to 636 (MMGRVVKVEKQVQSIEHKLDLL) form a coiled coil.

This sequence belongs to the potassium channel family. KQT (TC 1.A.1.15) subfamily. Kv7.4/KCNQ4 sub-subfamily. In terms of assembly, homotetramer. Interacts (via C-terminus) with calmodulin; forms a heterooctameric structure (with 4:4 KCNQ1:CALM stoichiometry); the interaction is calcium-independent, constitutive, participates in the proper assembly of a functional channel. The interaction with calcium-free CALM controls channel trafficking whereas interaction with calcium-bound CALM regulates channel gating. May form a functional heteromultimeric channel with KCNQ3. Interacts with HSP90AB1; promotes cell surface expression of KCNQ4. In terms of tissue distribution, expressed in the outer, but not the inner, sensory hair cells of the cochlea. Slightly expressed in heart, brain and skeletal muscle.

The protein localises to the basal cell membrane. It catalyses the reaction K(+)(in) = K(+)(out). With respect to regulation, two molecules of phosphatidylinositol-4,5-bisphosphate (PIP2-I and PIP2-II) are essential to activate KCNQ4 channel by inducing the coupling of the voltage-sensing domain (VSD) and the pore-forming domain (PD). Upon channel activation, PIP2-I and PIP2-II disrupt the VSD-calmodulin/CALM interaction, causing the release of CALM from the VSD which triggers the opening of the gate. Calcium suppresses KCNQ4 channel current through calcium-bound CALM C-terminus. Therefore CALM acts as calcium sensor that controls channel activity. ML213 potentiates KCNQ4 channel. KCNQ4 channel is blocked by linopirdin, XE991 and bepridil, whereas clofilium is without significant effect. Muscarinic agonist oxotremorine-M strongly suppress KCNQ4 current in CHO cells in which cloned KCNQ4 channels were coexpressed with M1 muscarinic receptors. Its function is as follows. Pore-forming subunit of the voltage-gated potassium (Kv) channel involved in the regulation of sensory cells excitability in the cochlea. KCNQ4/Kv7.4 channel is composed of 4 pore-forming subunits assembled as tetramers. Promotes the outflow of potassium ions in the repolarization phase of action potential which plays a role in regulating membrane potential of excitable cells. The channel conducts a slowly activating and deactivating current. Current often shows some inward rectification at positive potentials. Channel may be selectively permeable in vitro to other cations besides potassium, in decreasing order of affinity K(+) = Rb(+) &gt; Cs(+) &gt; Na(+). Important for normal physiological function of inner ear such as sensory perception of sound. This chain is Potassium voltage-gated channel subfamily KQT member 4, found in Homo sapiens (Human).